The following is a 393-amino-acid chain: 26S proteasome regulatory subunit RPN9 (393 aa).

One can recognise a PCI domain in the interval 187-355; the sequence is SFYYTSLLYL…ELVTISWVQP (169 aa).

It belongs to the proteasome subunit S11 family.

Functionally, acts as a regulatory subunit of the 26S proteasome which is involved in the ATP-dependent degradation of ubiquitinated proteins. The protein is 26S proteasome regulatory subunit RPN9 (RPN9) of Saccharomyces cerevisiae (strain ATCC 204508 / S288c) (Baker's yeast).